The primary structure comprises 393 residues: Pinosylvin synthase (393 aa).

A substrate-binding site is contributed by lysine 57–arginine 60. Residue cysteine 167 is part of the active site. Residues leucine 270 and glycine 308 to arginine 310 each bind substrate.

Belongs to the thiolase-like superfamily. Chalcone/stilbene synthases family. As to quaternary structure, homodimer.

Its subcellular location is the cytoplasm. The catalysed reaction is (E)-cinnamoyl-CoA + 3 malonyl-CoA + 3 H(+) = (E)-pinosylvin + 4 CO2 + 4 CoA. The enzyme catalyses 3-phenylpropanoyl-CoA + 3 malonyl-CoA + 3 H(+) = dihydropinosylvin + 4 CO2 + 4 CoA. Its pathway is phytoalexin biosynthesis; hydropinosylvin biosynthesis. In terms of biological role, catalyzes the production of pinosylvin from cinnamoyl-CoA and malonyl-CoA, and dihydropinosylvin from dihydrocinnamoyl-CoA. This chain is Pinosylvin synthase, found in Pinus sylvestris (Scotch pine).